The following is a 93-amino-acid chain: Large ribosomal subunit protein uL23 (93 aa).

It belongs to the universal ribosomal protein uL23 family. As to quaternary structure, part of the 50S ribosomal subunit. Contacts protein L29, and trigger factor when it is bound to the ribosome.

Its function is as follows. One of the early assembly proteins it binds 23S rRNA. One of the proteins that surrounds the polypeptide exit tunnel on the outside of the ribosome. Forms the main docking site for trigger factor binding to the ribosome. This is Large ribosomal subunit protein uL23 from Nautilia profundicola (strain ATCC BAA-1463 / DSM 18972 / AmH).